The primary structure comprises 325 residues: Pyruvate dehydrogenase E1 component subunit beta (325 aa).

Glutamate 59 lines the thiamine diphosphate pocket.

Heterodimer of an alpha and a beta chain. The cofactor is thiamine diphosphate.

The enzyme catalyses N(6)-[(R)-lipoyl]-L-lysyl-[protein] + pyruvate + H(+) = N(6)-[(R)-S(8)-acetyldihydrolipoyl]-L-lysyl-[protein] + CO2. Its function is as follows. The pyruvate dehydrogenase complex catalyzes the overall conversion of pyruvate to acetyl-CoA and CO(2). It contains multiple copies of three enzymatic components: pyruvate dehydrogenase (E1), dihydrolipoamide acetyltransferase (E2) and lipoamide dehydrogenase (E3). This chain is Pyruvate dehydrogenase E1 component subunit beta (pdhB), found in Rickettsia bellii (strain RML369-C).